Here is a 590-residue protein sequence, read N- to C-terminus: Aspartate--tRNA(Asp/Asn) ligase (590 aa).

L-aspartate is bound at residue Glu175. The segment at 199 to 202 is aspartate; sequence QQYK. Arg221 and His450 together coordinate L-aspartate. ATP is bound at residue 221–223; the sequence is RDE. Glu484 contacts ATP. Arg491 provides a ligand contact to L-aspartate. 536–539 provides a ligand contact to ATP; the sequence is GVDR.

The protein belongs to the class-II aminoacyl-tRNA synthetase family. Type 1 subfamily. In terms of assembly, homodimer.

It is found in the cytoplasm. The catalysed reaction is tRNA(Asx) + L-aspartate + ATP = L-aspartyl-tRNA(Asx) + AMP + diphosphate. In terms of biological role, aspartyl-tRNA synthetase with relaxed tRNA specificity since it is able to aspartylate not only its cognate tRNA(Asp) but also tRNA(Asn). Reaction proceeds in two steps: L-aspartate is first activated by ATP to form Asp-AMP and then transferred to the acceptor end of tRNA(Asp/Asn). This Bradyrhizobium sp. (strain ORS 278) protein is Aspartate--tRNA(Asp/Asn) ligase.